A 904-amino-acid chain; its full sequence is Phosphatidate phosphatase PAH1 (904 aa).

Positions 1 to 112 are N-LIP; the sequence is MSLVGRVGSL…SGSENNNGNQ (112 aa). Disordered stretches follow at residues 254–293, 305–326, 440–470, 574–595, and 612–655; these read EESS…HDAE, ELTK…EDRN, GIIE…DRKT, VEEN…SSSG, and EHTG…QLVR. Basic and acidic residues-rich tracts occupy residues 265–293, 311–326, and 449–470; these read DKVD…HDAE, ENVK…EDRN, and SERV…DRKT. The segment covering 631–642 has biased composition (polar residues); sequence GLQNSPETQSTT. The tract at residues 703–857 is C-LIP; sequence IVISDVDGTI…FIINPKGEVA (155 aa). Residues 707–711 carry the DXDXT motif motif; the sequence is DVDGT.

Belongs to the lipin family. Mg(2+) is required as a cofactor. As to expression, expressed in roots, leaves, stems, flowers, siliques, embryos and mature seeds.

It localises to the cytoplasm. It is found in the cytosol. It catalyses the reaction a 1,2-diacyl-sn-glycero-3-phosphate + H2O = a 1,2-diacyl-sn-glycerol + phosphate. Its function is as follows. Magnesium-dependent phosphatidate phosphatase which catalyzes the dephosphorylation of phosphatidate to yield diacylglycerol. Acts redundantly with PAH2 to repress phospholipid biosynthesis at the endoplasmic reticulum (ER). May function indirectly as repressor of multiple enzymes involved in phospholipid biosynthesis. Is involved in the pathway of galactolipid synthesis in the ER, which is required for the membrane lipid remodeling, an essential adaptation mechanism to cope with phosphate starvation. This chain is Phosphatidate phosphatase PAH1 (PAH1), found in Arabidopsis thaliana (Mouse-ear cress).